An 82-amino-acid chain; its full sequence is Small ribosomal subunit protein bS18 (82 aa).

It belongs to the bacterial ribosomal protein bS18 family. As to quaternary structure, part of the 30S ribosomal subunit. Forms a tight heterodimer with protein bS6.

In terms of biological role, binds as a heterodimer with protein bS6 to the central domain of the 16S rRNA, where it helps stabilize the platform of the 30S subunit. This chain is Small ribosomal subunit protein bS18, found in Rhizobium meliloti (strain 1021) (Ensifer meliloti).